The chain runs to 1464 residues: Alpha-glucan water dikinase, chloroplastic (1464 aa).

The N-terminal 77 residues, 1 to 77 (MSNSLGNNLL…KRAFSSSPHA (77 aa)), are a transit peptide targeting the chloroplast. The active-site Tele-phosphohistidine intermediate is the histidine 1069.

It belongs to the PEP-utilizing enzyme family. In terms of assembly, homodimer. Mg(2+) serves as cofactor. Expressed in leaves.

It localises to the plastid. It is found in the chloroplast. The catalysed reaction is [(1-&gt;4)-alpha-D-glucosyl](n) + n ATP + n H2O = [(1-&gt;4)-6-phospho-alpha-D-glucosyl](n) + n AMP + n phosphate + 2n H(+). The enzyme catalyses ATP + protein L-histidine = ADP + protein N-phospho-L-histidine.. Its function is as follows. Mediates the incorporation of phosphate into starch-like alpha-glucan, mostly at the C-6 position of glucose units. Acts as an overall regulator of starch mobilization. Required for starch degradation, suggesting that the phosphate content of starch regulates its degradability. More active on alpha-1,6 branched amylopectin. The sequence is that of Alpha-glucan water dikinase, chloroplastic (R1) from Solanum tuberosum (Potato).